A 1470-amino-acid polypeptide reads, in one-letter code: Transient receptor potential cation channel subfamily M member 2 (1470 aa).

The Cytoplasmic segment spans residues 1–725 (MDEAALEPTL…GELSVDNPHW (725 aa)). Residues tyrosine 267, arginine 274, 305–308 (GPGT), and arginine 330 contribute to the ADP-D-ribose site. An intramembrane segment occupies 726-738 (KVLLCMIFFPLIY). Topologically, residues 739-808 (TGFLTFRRDE…MSFLKSPQVK (70 aa)) are cytoplasmic. A helical transmembrane segment spans residues 809–829 (FYWNIASYFGFLWLFAVVLMI). Over 830 to 836 (DFQTSPS) the chain is Extracellular. A helical transmembrane segment spans residues 837-857 (WRELLLYVWLTSLVCEEIRQL). The Ca(2+) site is built by glutamate 853 and glutamine 856. The Cytoplasmic segment spans residues 858-876 (YHDFDGSGFRRKAKMYIKD). The chain crosses the membrane as a helical span at residues 877-897 (LWNILDVLSIVLFIAGLICRL). Ca(2+) is bound at residue asparagine 879. Topologically, residues 898-905 (QASDTVFY) are extracellular. A helical transmembrane segment spans residues 906–926 (IGKVILCIDFIIFCLRLMAIF). Residues 927–941 (SISRTLGPKIIIVRR) are Cytoplasmic-facing. A helical membrane pass occupies residues 942–968 (MMLDLFFFMFLLSIWVVAYGVAKQGIL). The Extracellular portion of the chain corresponds to 969 to 977 (IENEERLNW). Residues 978–1002 (IIRGAVYEPYITIFGNFPTNIDNTL) constitute an intramembrane region (pore-forming). The Selectivity filter signature appears at 991 to 993 (FGN). Topologically, residues 1003-1034 (FDISSCSVNASDPLKPKCPMLNADNTPVFPEW) are extracellular. Cysteine 1008 and cysteine 1020 form a disulfide bridge. Asparagine 1011 carries an N-linked (GlcNAc...) asparagine glycan. A helical membrane pass occupies residues 1035–1059 (LTIMMLCVYLLFANILLLNLLIAIF). Residues 1060-1087 (NYTFQEVQDNTDTIWKFQRYELIKEYHS) are Cytoplasmic-facing. Glutamate 1084 contacts Ca(2+). An intramembrane segment occupies 1088-1105 (RPALPPPFILLSHLILFI). Over 1106–1470 (RGVFLRDLPQ…QIAHHHNTYF (365 aa)) the chain is Cytoplasmic. The tract at residues 1157–1470 (HRIHDTAEKV…QIAHHHNTYF (314 aa)) is divergent Nudix hydrolase-like domain. Disordered regions lie at residues 1215–1256 (KSKV…LQYP) and 1281–1314 (PPVYNQQDSSESDTSALDKHRNPGGRTGIRGKGA). Residues 1231-1244 (DDGDSSGQETDDEE) show a composition bias toward acidic residues. Residues 1283 to 1295 (VYNQQDSSESDTS) are compositionally biased toward polar residues. Positions 1398 and 1400 each coordinate ADP-D-ribose.

This sequence belongs to the transient receptor (TC 1.A.4) family. LTrpC subfamily. TRPM2 sub-subfamily. Homotetramer.

The protein resides in the cell membrane. It catalyses the reaction Ca(2+)(in) = Ca(2+)(out). The catalysed reaction is Na(+)(in) = Na(+)(out). Its activity is regulated as follows. Activated by intracellular ADP-ribose. Ca(2+) and PI(4,5)P2 are required for channel opening by ADP-ribose. Nonselective, voltage-independent cation channel that mediates Ca(2+) influx, leading to increased cytoplasmic Ca(2+) levels. Functions as a ligand-gated ion channel, gated by intracellular adenosine diphosphate ribose (ADP-ribose), Ca(2+), warm temperature, and oxidative stress. Binding of ADP-ribose to the cytoplasmic N-terminal region causes a conformation change; the channel is primed but still requires Ca(2+) binding to trigger channel opening. In Danio rerio (Zebrafish), this protein is Transient receptor potential cation channel subfamily M member 2.